The sequence spans 511 residues: Acidic amino acid decarboxylase GADL1 (511 aa).

The residue at position 323 (K323) is an N6-(pyridoxal phosphate)lysine.

It belongs to the group II decarboxylase family. Homodimer. The cofactor is pyridoxal 5'-phosphate.

It catalyses the reaction L-aspartate + H(+) = beta-alanine + CO2. It carries out the reaction 3-sulfino-L-alanine + H(+) = hypotaurine + CO2. Its function is as follows. Catalyzes the decarboxylation of L-aspartate, 3-sulfino-L-alanine (cysteine sulfinic acid), and L-cysteate to beta-alanine, hypotaurine and taurine, respectively. The preferred substrate is L-aspartate. Does not exhibit any decarboxylation activity toward glutamate. This Xenopus tropicalis (Western clawed frog) protein is Acidic amino acid decarboxylase GADL1 (gadl1).